A 254-amino-acid chain; its full sequence is Glutamate racemase (254 aa).

Residues 10–11 and 42–43 each bind substrate; these read DS and YG. The Proton donor/acceptor role is filled by Cys73. 74–75 serves as a coordination point for substrate; the sequence is NT. Residue Cys183 is the Proton donor/acceptor of the active site. 184-185 serves as a coordination point for substrate; sequence TH.

This sequence belongs to the aspartate/glutamate racemases family.

It carries out the reaction L-glutamate = D-glutamate. The protein operates within cell wall biogenesis; peptidoglycan biosynthesis. Its function is as follows. Provides the (R)-glutamate required for cell wall biosynthesis. The sequence is that of Glutamate racemase from Herpetosiphon aurantiacus (strain ATCC 23779 / DSM 785 / 114-95).